An 88-amino-acid polypeptide reads, in one-letter code: Putative membrane protein insertion efficiency factor (88 aa).

The disordered stretch occupies residues 68–88 (VPPKKDKNADSEHSCKVHHHH). A compositionally biased stretch (basic and acidic residues) spans 69–82 (PPKKDKNADSEHSC).

The protein belongs to the UPF0161 family.

It is found in the cell membrane. In terms of biological role, could be involved in insertion of integral membrane proteins into the membrane. The protein is Putative membrane protein insertion efficiency factor of Listeria monocytogenes serovar 1/2a (strain ATCC BAA-679 / EGD-e).